The following is a 122-amino-acid chain: Large ribosomal subunit protein bL12 (122 aa).

The protein belongs to the bacterial ribosomal protein bL12 family. Homodimer. Part of the ribosomal stalk of the 50S ribosomal subunit. Forms a multimeric L10(L12)X complex, where L10 forms an elongated spine to which 2 to 4 L12 dimers bind in a sequential fashion. Binds GTP-bound translation factors.

Forms part of the ribosomal stalk which helps the ribosome interact with GTP-bound translation factors. Is thus essential for accurate translation. The protein is Large ribosomal subunit protein bL12 of Sulfurimonas denitrificans (strain ATCC 33889 / DSM 1251) (Thiomicrospira denitrificans (strain ATCC 33889 / DSM 1251)).